The primary structure comprises 678 residues: ABC transporter G family member 13 (678 aa).

One can recognise an ABC transporter domain in the interval 10–254 (VAWEDLTVVI…FGEAGFPCPS (245 aa)). An ATP-binding site is contributed by 48–55 (GPSGSGKS). Residues 355 to 567 (KQLRILTQRS…ALQGAYKNEM (213 aa)) enclose the ABC transmembrane type-2 domain. The next 6 helical transmembrane spans lie at 374-394 (YYWMRIAVYIVLSICVGSIFF), 409-429 (CGGFMAGFMTFMSIGGFQSFI), 446-466 (VAVYTVSNLLSSLPFIILMCL), 490-510 (LDLICAITTVESCMMMIASVV), 513-533 (FLMGVMLGAGYIGIMVLSAGF), and 602-622 (LDLAVVMMILIGYRIAFFAIL). Ser-658 carries the phosphoserine modification.

The protein belongs to the ABC transporter superfamily. ABCG family. Eye pigment precursor importer (TC 3.A.1.204) subfamily.

The protein localises to the membrane. The protein is ABC transporter G family member 13 (ABCG13) of Arabidopsis thaliana (Mouse-ear cress).